The sequence spans 1334 residues: Adenylate cyclase type 9 (1334 aa).

Disordered regions lie at residues 1–28 (MASPPHQQLLHHHSTEVSCDSSGDSNSV) and 49–71 (ISSSCSSGESGGVGRGGGGGLRR). Over 1 to 113 (MASPPHQQLL…CFPQTQRRFR (113 aa)) the chain is Cytoplasmic. Residues 16 to 28 (EVSCDSSGDSNSV) are compositionally biased toward polar residues. Positions 57-69 (ESGGVGRGGGGGL) are enriched in gly residues. The chain crosses the membrane as a helical span at residues 114-134 (YALFYIGSACLLWGIYFGVHM). Residues 135–137 (REK) lie on the Extracellular side of the membrane. Residues 138 to 158 (QMVFMVPALCFLLVCVAFFAF) form a helical membrane-spanning segment. At 159–167 (TFTKAYARR) the chain is on the cytoplasmic side. A helical membrane pass occupies residues 168–187 (YVWTSGYTLLVFALTLAPQF). Over 188-207 (QPWTLGERQRVQPRPAAPVD) the chain is Extracellular. Residues 208–227 (TCLSQVGSFSMCVEVLLLLY) traverse the membrane as a helical segment. The Cytoplasmic portion of the chain corresponds to 228 to 233 (TVMHLP). The helical transmembrane segment at 234–250 (LYLSLFLGLSYSVLFET) threads the bilayer. Topologically, residues 251–269 (SAFRDESCTLLGGGAVYWE) are extracellular. Residues 270-290 (LLSKAFLHVCIHAIGIHLFIM) traverse the membrane as a helical segment. At 291 to 768 (SEVRSRSTFL…VKTFASATFS (478 aa)) the chain is on the cytoplasmic side. The disordered stretch occupies residues 338-363 (QGDDESENSVKRHSTSSPKNRKKKPS). Residues 348–363 (KRHSTSSPKNRKKKPS) show a composition bias toward basic residues. The Mg(2+) site is built by Asp388, Ile389, and Asp432. Residues 388 to 393 (DIVGFT), 430 to 432 (LGD), and Arg476 contribute to the ATP site. Positions 635–670 (GCQDEHKNSTKAPGGHSPKTQNGLLSPPQEEKLSNS) are disordered. A helical transmembrane segment spans residues 769-789 (SLLDVFLSTTVFLILSVTCFL). The Extracellular portion of the chain corresponds to 790 to 800 (KHGMVASPPPP). The helical transmembrane segment at 801–821 (AAVVVFVIAILLEVLSLVISV) threads the bilayer. At 822 to 849 (RMVFFLEEVMACTKRLLELISGWLPRHF) the chain is on the cytoplasmic side. Residues 850 to 870 (LGAILVSLPALAVFSHFTSDF) form a helical membrane-spanning segment. At 871 to 873 (ETN) the chain is on the extracellular side. A helical membrane pass occupies residues 874-894 (IHYTMFMCCAILIAIVQYCNF). Residues 895 to 902 (CQLSSWMR) are Cytoplasmic-facing. Residues 903–923 (SLLATVVGAVLLILLYVSLCP) traverse the membrane as a helical segment. Residues 924–957 (DSSVETLHLDLAQNLSSRKSPCNSSMPADVKRPA) lie on the Extracellular side of the membrane. Asn937 and Asn946 each carry an N-linked (GlcNAc...) asparagine glycan. A helical membrane pass occupies residues 958-978 (DLIGQEVILAVFLLLLLVWFL). Residues 979 to 1334 (NRSFEVSYRL…LTKLNVSKSV (356 aa)) lie on the Cytoplasmic side of the membrane. ATP contacts are provided by residues Lys1090, 1167-1169 (DIW), 1174-1178 (NIASR), and Lys1214. Residues 1266–1303 (SVQNSDKTAHATDNSETKDALPSSKKLQKEPTKAEERC) are disordered. Basic and acidic residues-rich tracts occupy residues 1272–1284 (KTAHATDNSETKD) and 1292–1303 (LQKEPTKAEERC).

The protein belongs to the adenylyl cyclase class-4/guanylyl cyclase family. It depends on Mg(2+) as a cofactor. The cofactor is Mn(2+). Detected in embryonic heart (at protein level).

The protein localises to the cell membrane. It localises to the membrane. The catalysed reaction is ATP = 3',5'-cyclic AMP + diphosphate. Its activity is regulated as follows. Insensitive to calcium/calmodulin, forskolin and somatostatin. Stimulated by beta-adrenergic receptor activation. Activity is down-regulated by calcium/calcineurin. Functionally, adenylyl cyclase that catalyzes the formation of the signaling molecule cAMP in response to activation of G protein-coupled receptors. The polypeptide is Adenylate cyclase type 9 (ADCY9) (Gallus gallus (Chicken)).